We begin with the raw amino-acid sequence, 334 residues long: Glutaminase (334 aa).

Substrate-binding residues include Ser76, Asn126, Glu170, Asn177, Tyr201, Tyr253, and Val271.

It belongs to the glutaminase family. In terms of assembly, homotetramer.

The catalysed reaction is L-glutamine + H2O = L-glutamate + NH4(+). This chain is Glutaminase, found in Trichormus variabilis (strain ATCC 29413 / PCC 7937) (Anabaena variabilis).